Here is a 2798-residue protein sequence, read N- to C-terminus: Kinesin-like protein KIN-12F (2798 aa).

The segment at 1–165 is disordered; the sequence is MVRDLAAVRR…RPPMSSGQRG (165 aa). Composition is skewed to low complexity over residues 8–22 and 31–58; these read VRRT…SSAS and PVDA…QPPQ. Residues 210–547 form the Kinesin motor domain; it reads NVQVVIRVRP…LKFAQRARLI (338 aa). Position 291–298 (291–298) interacts with ATP; it reads GQTGSGKT. Over residues 600 to 615 the composition is skewed to acidic residues; it reads DVDDGTESMNMDEEND. The tract at residues 600-621 is disordered; sequence DVDDGTESMNMDEENDNDAHDR. 5 coiled-coil regions span residues 792–835, 890–987, 1014–1108, 1281–1322, and 2130–2333; these read ELKR…HSSN, LAEE…HRRQ, LKRM…VMKE, QRAM…LKNE, and ELVD…VRQQ. Residues 2338 to 2359 are disordered; that stretch reads PSSGQATSSLEGGMGDFTDSSR. Coiled-coil stretches lie at residues 2361–2427 and 2545–2758; these read SREI…VKSD and ESKE…LKLK. A disordered region spans residues 2772–2798; sequence RSESSSLSSGRSRSPSVCRSPSISSFR. Residues 2774–2798 show a composition bias toward low complexity; sequence ESSSLSSGRSRSPSVCRSPSISSFR.

Belongs to the TRAFAC class myosin-kinesin ATPase superfamily. Kinesin family. KIN-12 subfamily.

The protein is Kinesin-like protein KIN-12F of Oryza sativa subsp. japonica (Rice).